A 55-amino-acid chain; its full sequence is Ovomucoid (55 aa).

Positions 5–55 (VDCSEHPKPACTLDYRPICGSDSKTYSNKCDFCNAVMDSNGTLTLSHFGKC) constitute a Kazal-like domain. Cystine bridges form between cysteine 7/cysteine 37, cysteine 15/cysteine 34, and cysteine 23/cysteine 55. Asparagine 44 carries an N-linked (GlcNAc...) asparagine glycan.

The protein localises to the secreted. The polypeptide is Ovomucoid (Dacelo novaeguineae (Laughing kookaburra)).